Here is a 29-residue protein sequence, read N- to C-terminus: Toxin II.9 (29 aa).

Residues 2 to 29 (KDGYLVNKYTGCKVNCYKLGENKFCNRE) enclose the LCN-type CS-alpha/beta domain.

The protein belongs to the long (4 C-C) scorpion toxin superfamily. Sodium channel inhibitor family. Beta subfamily. As to expression, expressed by the venom gland.

It is found in the secreted. In terms of biological role, binds to sodium channels (Nav) and shift the voltage of activation toward more negative potentials. This toxin is active on crustaceans. The sequence is that of Toxin II.9 from Centruroides limpidus (Mexican scorpion).